Here is a 125-residue protein sequence, read N- to C-terminus: Succinate dehydrogenase hydrophobic membrane anchor subunit (125 aa).

At 1-24 (MTYDFRAEIVKAKNTGSAKSGSHH) the chain is on the cytoplasmic side. The chain crosses the membrane as a helical span at residues 25-45 (WLLQRITAIILVLCSLWLLYF). The Periplasmic segment spans residues 46-67 (TLANKNSDVNIIIWELKRPINL). The helical transmembrane segment at 68–89 (IPLLIAVITSLYHAMLGMQVVI) threads the bilayer. Histidine 80 serves as a coordination point for heme. Over 90–99 (EDYISCNKLR) the chain is Cytoplasmic. Tyrosine 92 contributes to the a ubiquinone binding site. Residues 100–123 (NTLIIAVKLFSILTIVAFIVAVFY) form a helical membrane-spanning segment.

In terms of assembly, part of an enzyme complex containing four subunits: a flavoprotein, an iron-sulfur protein, plus two membrane-anchoring proteins, SdhC and SdhD. Heme is required as a cofactor.

It is found in the cell inner membrane. The protein operates within carbohydrate metabolism; tricarboxylic acid cycle. In terms of biological role, membrane-anchoring subunit of succinate dehydrogenase (SDH). This chain is Succinate dehydrogenase hydrophobic membrane anchor subunit (sdhD), found in Rickettsia bellii (strain RML369-C).